A 240-amino-acid chain; its full sequence is Cysteine-rich secretory protein (240 aa).

Residues 1-19 (MIAFIVLPILAAVLQQSSG) form the signal peptide. One can recognise an SCP domain in the interval 38-166 (VDLHNSLRRS…EYSYFYVCQY (129 aa)). 8 disulfides stabilise this stretch: Cys-75–Cys-153, Cys-92–Cys-167, Cys-148–Cys-164, Cys-186–Cys-193, Cys-189–Cys-198, Cys-202–Cys-235, Cys-211–Cys-229, and Cys-220–Cys-233. The ShKT domain maps to 202 to 235 (CTKEDKYSNCKSLVQQAGCQDKQMQSDCSAICFC).

Belongs to the CRISP family. As to expression, expressed by the venom gland.

It localises to the secreted. In terms of biological role, weakly blocks contraction of smooth muscle elicited by high potassium-induced depolarization, but does not block caffeine-stimulated contraction. May target voltage-gated calcium channels on smooth muscle. The protein is Cysteine-rich secretory protein of Crotalus adamanteus (Eastern diamondback rattlesnake).